The following is a 54-amino-acid chain: Large ribosomal subunit protein bL32 (54 aa).

Positions 1 to 26 are disordered; sequence MAVQKNKPTRSKRGMRRSHDSLTAPH. Positions 7 to 16 are enriched in basic residues; it reads KPTRSKRGMR.

This sequence belongs to the bacterial ribosomal protein bL32 family.

In Buchnera aphidicola subsp. Acyrthosiphon pisum (strain 5A), this protein is Large ribosomal subunit protein bL32.